Here is a 783-residue protein sequence, read N- to C-terminus: Cadherin-5 (783 aa).

An N-terminal signal peptide occupies residues 1 to 25 (MQALVMLLATGATYYLGLLAAAAAA). Residues 26-45 (VNPGRPNTPGSLPAHRRQKR) constitute a propeptide that is removed on maturation. Cadherin domains lie at 44 to 149 (KRDW…WPVF), 150 to 256 (THRV…FPIF), 257 to 371 (TQNR…PPIF), 372 to 478 (QQPF…APEF), and 478 to 585 (FAKP…GEFT). Over 46–599 (DWIWNQMHID…AAAQVGISIQ (554 aa)) the chain is Extracellular. Positions 56 and 57 each coordinate Ca(2+). An N-linked (GlcNAc...) asparagine glycan is attached at N59. D107, E109, D141, V142, N143, D144, and N145 together coordinate Ca(2+). The N-linked (GlcNAc...) asparagine glycan is linked to N155. Ca(2+) contacts are provided by D175, D177, H184, and D229. Residues N361, N441, and N523 are each glycosylated (N-linked (GlcNAc...) asparagine). A helical membrane pass occupies residues 600–620 (ALVAIFLCILTFTVITLLIIL). The interval 621 to 660 (RRRLRKQARAHGKSVPEIHEQLVTYDEEGGGEMDTTSYDV) is required for interaction with PALS1. Topologically, residues 621–783 (RRRLRKQARA…GSDPQEELVY (163 aa)) are cytoplasmic.

Part of a complex composed of AMOTL2, MAGI1 and CDH5, within the complex AMOTL2 acts as a scaffold protein for the interaction of MAGI1 with CDH5. The complex is required for coupling actin fibers to cell junctions in endothelial cells. Within the complex AMOTL2 (via its N-terminus) interacts with CDH5. Interacts (via cadherin 5 domain) with PTPRB. Interacts with TRPC4. Interacts with KRIT1. Interacts with PARD3. Interacts with RTN4 (isoform B). Interacts with PALS1; the interaction promotes PALS1 localization to cell junctions and is required for CDH5-mediated vascular lumen formation and endothelial cell. Interacts with CTNND1/p120-catenin; the interaction controls CADH5 endocytosis. Post-translationally, phosphorylated on tyrosine residues by KDR/VEGFR-2. Dephosphorylated by PTPRB. In terms of processing, O-glycosylated.

The protein resides in the cell junction. It localises to the adherens junction. It is found in the cell membrane. The protein localises to the cytoplasm. In terms of biological role, cadherins are calcium-dependent cell adhesion proteins. They preferentially interact with themselves in a homophilic manner in connecting cells; cadherins may thus contribute to the sorting of heterogeneous cell types. This cadherin may play a important role in endothelial cell biology through control of the cohesion and organization of the intercellular junctions. It associates with alpha-catenin forming a link to the cytoskeleton. Plays a role in coupling actin fibers to cell junctions in endothelial cells, via acting as a cell junctional complex anchor for AMOTL2 and MAGI1. Acts in concert with KRIT1 and PALS1 to establish and maintain correct endothelial cell polarity and vascular lumen. These effects are mediated by recruitment and activation of the Par polarity complex and RAP1B. Required for activation of PRKCZ and for localization of phosphorylated PRKCZ, PARD3, TIAM1 and RAP1B to the cell junction. Associates with CTNND1/p120-catenin to control CADH5 endocytosis. In Bos taurus (Bovine), this protein is Cadherin-5.